We begin with the raw amino-acid sequence, 119 residues long: cAMP-responsive element-binding protein-like 2 (119 aa).

The segment at 1 to 23 (MDDSKIVAGKVKKPGKRGRKPAK) is disordered. Basic residues predominate over residues 10-21 (KVKKPGKRGRKP). Residues 23-86 (KIDLKAKLER…LAMDQGKIPS (64 aa)) enclose the bZIP domain. The interval 29–60 (KLERSRQSARECRARKKLRYQYLEELVSSKER) is basic motif. The leucine-zipper stretch occupies residues 62-69 (ICALREEL). The interval 95–119 (DEQKTPQSCSNKTTKNSKYSSSSGI) is disordered. The segment covering 102-119 (SCSNKTTKNSKYSSSSGI) has biased composition (low complexity).

It belongs to the bZIP family. ATF subfamily.

The protein localises to the nucleus. Its function is as follows. Probable regulator of creb1 transcriptional activity which is involved in adipose cells differentiation. May also play a regulatory role in the cell cycle. The polypeptide is cAMP-responsive element-binding protein-like 2 (crebl2) (Danio rerio (Zebrafish)).